A 101-amino-acid chain; its full sequence is Small ribosomal subunit protein uS14 (101 aa).

Belongs to the universal ribosomal protein uS14 family. As to quaternary structure, part of the 30S ribosomal subunit. Contacts proteins S3 and S10.

Functionally, binds 16S rRNA, required for the assembly of 30S particles and may also be responsible for determining the conformation of the 16S rRNA at the A site. This is Small ribosomal subunit protein uS14 from Rhizorhabdus wittichii (strain DSM 6014 / CCUG 31198 / JCM 15750 / NBRC 105917 / EY 4224 / RW1) (Sphingomonas wittichii).